Consider the following 286-residue polypeptide: NFU1 iron-sulfur cluster scaffold homolog, mitochondrial (286 aa).

Residues 1 to 66 (MSKLLTNTAL…RQIQLSGARN (66 aa)) constitute a mitochondrion transit peptide. Positions 182–250 (IKELLDTRIR…IPEVESVEQV (69 aa)) are nifU. Residues cysteine 219 and cysteine 222 each coordinate [4Fe-4S] cluster.

Belongs to the NifU family.

The protein resides in the mitochondrion. Functionally, molecular scaffold for [Fe-S] cluster assembly of mitochondrial iron-sulfur proteins. This chain is NFU1 iron-sulfur cluster scaffold homolog, mitochondrial, found in Drosophila ananassae (Fruit fly).